A 299-amino-acid polypeptide reads, in one-letter code: 4-hydroxy-tetrahydrodipicolinate synthase 2 (299 aa).

Thr-54 is a pyruvate binding site. Tyr-142 serves as the catalytic Proton donor/acceptor. Lys-170 serves as the catalytic Schiff-base intermediate with substrate. Val-210 lines the pyruvate pocket.

The protein belongs to the DapA family. As to quaternary structure, homotetramer; dimer of dimers.

The protein localises to the cytoplasm. The enzyme catalyses L-aspartate 4-semialdehyde + pyruvate = (2S,4S)-4-hydroxy-2,3,4,5-tetrahydrodipicolinate + H2O + H(+). The protein operates within amino-acid biosynthesis; L-lysine biosynthesis via DAP pathway; (S)-tetrahydrodipicolinate from L-aspartate: step 3/4. Its function is as follows. Catalyzes the condensation of (S)-aspartate-beta-semialdehyde [(S)-ASA] and pyruvate to 4-hydroxy-tetrahydrodipicolinate (HTPA). This chain is 4-hydroxy-tetrahydrodipicolinate synthase 2, found in Streptomyces coelicolor (strain ATCC BAA-471 / A3(2) / M145).